We begin with the raw amino-acid sequence, 309 residues long: tRNA pseudouridine synthase B (309 aa).

Asp-39 (nucleophile) is an active-site residue.

Belongs to the pseudouridine synthase TruB family. Type 1 subfamily.

It carries out the reaction uridine(55) in tRNA = pseudouridine(55) in tRNA. In terms of biological role, responsible for synthesis of pseudouridine from uracil-55 in the psi GC loop of transfer RNAs. This chain is tRNA pseudouridine synthase B, found in Bacillus subtilis (strain 168).